The sequence spans 397 residues: uncharacterized protein (397 aa).

This is an uncharacterized protein from Nostoc sp. (strain PCC 7120 / SAG 25.82 / UTEX 2576).